The chain runs to 416 residues: D-amino acid dehydrogenase (416 aa).

FAD is bound at residue 3–17 (ITILGSGVIGVTTAY).

Belongs to the DadA oxidoreductase family. FAD is required as a cofactor.

It carries out the reaction a D-alpha-amino acid + A + H2O = a 2-oxocarboxylate + AH2 + NH4(+). Its pathway is amino-acid degradation; D-alanine degradation; NH(3) and pyruvate from D-alanine: step 1/1. Oxidative deamination of D-amino acids. The protein is D-amino acid dehydrogenase of Brucella abortus (strain S19).